We begin with the raw amino-acid sequence, 440 residues long: Ribosomal protein uS12 methylthiotransferase RimO (440 aa).

The region spanning 8 to 124 is the MTTase N-terminal domain; the sequence is TSVFLLSLGC…VLDALGARYH (117 aa). The [4Fe-4S] cluster site is built by cysteine 17, cysteine 53, cysteine 87, cysteine 148, cysteine 152, and cysteine 155. In terms of domain architecture, Radical SAM core spans 134-363; sequence LTPPHSSYLK…MELQEEIARK (230 aa). The TRAM domain occupies 366–437; it reads EAFVGSLMTV…AYELHGTVES (72 aa).

This sequence belongs to the methylthiotransferase family. RimO subfamily. [4Fe-4S] cluster serves as cofactor.

It localises to the cytoplasm. It catalyses the reaction L-aspartate(89)-[ribosomal protein uS12]-hydrogen + (sulfur carrier)-SH + AH2 + 2 S-adenosyl-L-methionine = 3-methylsulfanyl-L-aspartate(89)-[ribosomal protein uS12]-hydrogen + (sulfur carrier)-H + 5'-deoxyadenosine + L-methionine + A + S-adenosyl-L-homocysteine + 2 H(+). Functionally, catalyzes the methylthiolation of an aspartic acid residue of ribosomal protein uS12. The chain is Ribosomal protein uS12 methylthiotransferase RimO from Chlorobium luteolum (strain DSM 273 / BCRC 81028 / 2530) (Pelodictyon luteolum).